We begin with the raw amino-acid sequence, 632 residues long: Tail spike protein (632 aa).

The Peptidase S74 domain maps to 505 to 630; it reads SDARCKTEPL…KRMQEALAAL (126 aa).

As to quaternary structure, homotrimer. Proteolytic cleavage and release of the chaperone in the host cytosol stabilizes the folded protein. The cleavage gives rise to the mature tail spike protein but is not essential for catalytic activity.

The protein localises to the virion. Functions as a receptor binding protein (RBP) and probably mediates the attachment to the host capsular exopolysaccharides. Displays a depolymerase activity that specifically degrades the K5-type polysaccharides of Escherichia coli capsule. Its function is as follows. The C-terminal chaperone protein mediates homotrimerization and proper folding of the catalytic trimer. The polypeptide is Tail spike protein (kflA) (Escherichia virus K5 (Bacteriophage K5)).